The following is a 210-amino-acid chain: 3-demethoxyubiquinol 3-hydroxylase (210 aa).

Fe cation is bound by residues Glu59, Glu89, His92, Glu141, Glu173, and His176.

It belongs to the COQ7 family. Requires Fe cation as cofactor.

It is found in the cell membrane. The catalysed reaction is a 5-methoxy-2-methyl-3-(all-trans-polyprenyl)benzene-1,4-diol + AH2 + O2 = a 3-demethylubiquinol + A + H2O. It functions in the pathway cofactor biosynthesis; ubiquinone biosynthesis. Functionally, catalyzes the hydroxylation of 2-nonaprenyl-3-methyl-6-methoxy-1,4-benzoquinol during ubiquinone biosynthesis. In Marinomonas sp. (strain MWYL1), this protein is 3-demethoxyubiquinol 3-hydroxylase.